The chain runs to 88 residues: Cell division topological specificity factor (88 aa).

The protein belongs to the MinE family.

In terms of biological role, prevents the cell division inhibition by proteins MinC and MinD at internal division sites while permitting inhibition at polar sites. This ensures cell division at the proper site by restricting the formation of a division septum at the midpoint of the long axis of the cell. This Pseudoalteromonas translucida (strain TAC 125) protein is Cell division topological specificity factor.